Consider the following 174-residue polypeptide: Translationally-controlled tumor protein homolog 1 (174 aa).

One can recognise a TCTP domain in the interval 1–174 (MRVFKDIVGY…FKDGLESVKY (174 aa)).

Belongs to the TCTP family.

Its subcellular location is the cytoplasm. Involved in calcium binding and microtubule stabilization. This Dictyostelium discoideum (Social amoeba) protein is Translationally-controlled tumor protein homolog 1.